Reading from the N-terminus, the 386-residue chain is Chaperone protein DnaJ (386 aa).

One can recognise a J domain in the interval 6 to 70 (DYYEVLGVDK…QKRAAYDQYG (65 aa)). Residues 141 to 223 (GKDTEVSYKR…CHGTGHEKKT (83 aa)) form a CR-type zinc finger. Positions 154, 157, 171, 174, 197, 200, 211, and 214 each coordinate Zn(2+). CXXCXGXG motif repeat units lie at residues 154–161 (CHTCGGNG), 171–178 (CHKCKGSG), 197–204 (CDVCHGTG), and 211–218 (CETCHGTG). The segment at 363-386 (LTGQSTEEQQSEGFFDKMKDAFKK) is disordered. A compositionally biased stretch (polar residues) spans 364 to 374 (TGQSTEEQQSE). Basic and acidic residues predominate over residues 376-386 (FFDKMKDAFKK).

Belongs to the DnaJ family. In terms of assembly, homodimer. Requires Zn(2+) as cofactor.

The protein localises to the cytoplasm. Its function is as follows. Participates actively in the response to hyperosmotic and heat shock by preventing the aggregation of stress-denatured proteins and by disaggregating proteins, also in an autonomous, DnaK-independent fashion. Unfolded proteins bind initially to DnaJ; upon interaction with the DnaJ-bound protein, DnaK hydrolyzes its bound ATP, resulting in the formation of a stable complex. GrpE releases ADP from DnaK; ATP binding to DnaK triggers the release of the substrate protein, thus completing the reaction cycle. Several rounds of ATP-dependent interactions between DnaJ, DnaK and GrpE are required for fully efficient folding. Also involved, together with DnaK and GrpE, in the DNA replication of plasmids through activation of initiation proteins. The sequence is that of Chaperone protein DnaJ from Tetragenococcus halophilus (Pediococcus halophilus).